The following is an 88-amino-acid chain: Cell division topological specificity factor (88 aa).

It belongs to the MinE family.

Its function is as follows. Prevents the cell division inhibition by proteins MinC and MinD at internal division sites while permitting inhibition at polar sites. This ensures cell division at the proper site by restricting the formation of a division septum at the midpoint of the long axis of the cell. This is Cell division topological specificity factor from Aeromonas hydrophila subsp. hydrophila (strain ATCC 7966 / DSM 30187 / BCRC 13018 / CCUG 14551 / JCM 1027 / KCTC 2358 / NCIMB 9240 / NCTC 8049).